The following is a 400-amino-acid chain: Argininosuccinate synthase (400 aa).

Residues Ala-10 to Ser-18 and Ala-38 contribute to the ATP site. Tyr-89 is an L-citrulline binding site. Residue Gly-119 participates in ATP binding. Residues Thr-121, Asn-125, and Asp-126 each coordinate L-aspartate. Asn-125 serves as a coordination point for L-citrulline. L-citrulline is bound by residues Arg-129, Ser-177, Ser-186, Glu-262, and Tyr-274.

Belongs to the argininosuccinate synthase family. Type 1 subfamily. As to quaternary structure, homotetramer.

It is found in the cytoplasm. The enzyme catalyses L-citrulline + L-aspartate + ATP = 2-(N(omega)-L-arginino)succinate + AMP + diphosphate + H(+). It functions in the pathway amino-acid biosynthesis; L-arginine biosynthesis; L-arginine from L-ornithine and carbamoyl phosphate: step 2/3. The sequence is that of Argininosuccinate synthase from Nostoc sp. (strain PCC 7120 / SAG 25.82 / UTEX 2576).